A 622-amino-acid polypeptide reads, in one-letter code: Chromosomal replication initiator protein DnaA (622 aa).

Residues 1–99 (MADVPADLAA…SAGEPPAPPA (99 aa)) are domain I, interacts with DnaA modulators. The disordered stretch occupies residues 88–282 (DDSAGEPPAP…APGPGEPHAR (195 aa)). The domain II stretch occupies residues 100–281 (PPMHQSHQGP…PAPGPGEPHA (182 aa)). Composition is skewed to basic and acidic residues over residues 118–137 (QRDDAPRGDTYDGYGHRPSD) and 176–210 (GYQDREQPPGEPYRESEAYQRESEQYREQPPEPWR). A compositionally biased stretch (gly residues) spans 250 to 262 (PGGHGPGRTGGSV). The tract at residues 282-498 (RLNPKYLFDT…GALIRVTAFA (217 aa)) is domain III, AAA+ region. Positions 326, 328, 329, and 330 each coordinate ATP. The interval 499-622 (SLNRQPVDLG…TELTNRIKNG (124 aa)) is domain IV, binds dsDNA.

Belongs to the DnaA family. Oligomerizes as a right-handed, spiral filament on DNA at oriC.

The protein localises to the cytoplasm. Its function is as follows. Plays an essential role in the initiation and regulation of chromosomal replication. ATP-DnaA binds to the origin of replication (oriC) to initiate formation of the DNA replication initiation complex once per cell cycle. Binds the DnaA box (a 9 base pair repeat at the origin) and separates the double-stranded (ds)DNA. Forms a right-handed helical filament on oriC DNA; dsDNA binds to the exterior of the filament while single-stranded (ss)DNA is stabiized in the filament's interior. The ATP-DnaA-oriC complex binds and stabilizes one strand of the AT-rich DNA unwinding element (DUE), permitting loading of DNA polymerase. After initiation quickly degrades to an ADP-DnaA complex that is not apt for DNA replication. Binds acidic phospholipids. The sequence is that of Chromosomal replication initiator protein DnaA from Streptomyces griseus subsp. griseus (strain JCM 4626 / CBS 651.72 / NBRC 13350 / KCC S-0626 / ISP 5235).